The primary structure comprises 390 residues: Copper-containing nitrite reductase (390 aa).

Positions 1–18 are cleaved as a signal peptide; the sequence is MKRQALAAMIASLFALAA. C19 is lipidated: N-palmitoyl cysteine. C19 carries the S-diacylglycerol cysteine lipid modification. Positions 30-51 are disordered; that stretch reads ETPAAAAEAASSAAQTAAETPS. Plastocyanin-like domains follow at residues 101 to 195 and 245 to 346; these read WTFD…ILVE and GHVG…LKVE. H134, H139, H174, C175, H183, and M188 together coordinate Cu cation. H139 provides a ligand contact to substrate. H280 is a binding site for substrate. H329 is a binding site for Cu cation. The segment at 367–390 is disordered; the sequence is GAAPAASAPAASAPAASASEKSVY. Over residues 368–390 the composition is skewed to low complexity; sequence AAPAASAPAASAPAASASEKSVY. 3 repeat units span residues 371–375, 376–380, and 381–385. Residues 371 to 385 are 3 X 5 AA tandem repeats of A-A-S-A-P; it reads AASAPAASAPAASAS.

The protein belongs to the multicopper oxidase family. In terms of assembly, homotrimer. It depends on Cu(+) as a cofactor. Cu(2+) is required as a cofactor.

Its subcellular location is the cell outer membrane. It catalyses the reaction nitric oxide + Fe(III)-[cytochrome c] + H2O = Fe(II)-[cytochrome c] + nitrite + 2 H(+). In terms of biological role, catalyzes the reduction of nitrite to nitric oxide (NO). It could be essential for growth and survival in oxygen-depleted environments. This Neisseria meningitidis serogroup B (strain ATCC BAA-335 / MC58) protein is Copper-containing nitrite reductase (aniA).